The primary structure comprises 391 residues: Phosphoglycerate kinase (391 aa).

Substrate-binding positions include 21-23 (DLN), Arg-36, 59-62 (HLGR), Arg-113, and Arg-146. ATP contacts are provided by residues Lys-197, Glu-319, and 345–348 (GGDT).

It belongs to the phosphoglycerate kinase family. Monomer.

It is found in the cytoplasm. It catalyses the reaction (2R)-3-phosphoglycerate + ATP = (2R)-3-phospho-glyceroyl phosphate + ADP. Its pathway is carbohydrate degradation; glycolysis; pyruvate from D-glyceraldehyde 3-phosphate: step 2/5. In Xanthomonas oryzae pv. oryzae (strain PXO99A), this protein is Phosphoglycerate kinase.